Here is a 313-residue protein sequence, read N- to C-terminus: Porphobilinogen deaminase (313 aa).

An S-(dipyrrolylmethanemethyl)cysteine modification is found at Cys241.

It belongs to the HMBS family. In terms of assembly, monomer. The cofactor is dipyrromethane.

The enzyme catalyses 4 porphobilinogen + H2O = hydroxymethylbilane + 4 NH4(+). Its pathway is porphyrin-containing compound metabolism; protoporphyrin-IX biosynthesis; coproporphyrinogen-III from 5-aminolevulinate: step 2/4. It functions in the pathway porphyrin-containing compound metabolism; chlorophyll biosynthesis. Its function is as follows. Tetrapolymerization of the monopyrrole PBG into the hydroxymethylbilane pre-uroporphyrinogen in several discrete steps. The polypeptide is Porphobilinogen deaminase (Chlorobium chlorochromatii (strain CaD3)).